The sequence spans 691 residues: DNA ligase (691 aa).

Residues 41-45 (DAEYD), 90-91 (SL), and glutamate 130 each bind NAD(+). Lysine 132 functions as the N6-AMP-lysine intermediate in the catalytic mechanism. Arginine 153, glutamate 190, lysine 307, and lysine 331 together coordinate NAD(+). Residues cysteine 425, cysteine 428, cysteine 443, and cysteine 449 each contribute to the Zn(2+) site. In terms of domain architecture, BRCT spans 610–691 (APQGVLAGKT…LHQLLEGNTP (82 aa)).

This sequence belongs to the NAD-dependent DNA ligase family. LigA subfamily. Mg(2+) is required as a cofactor. Requires Mn(2+) as cofactor.

It catalyses the reaction NAD(+) + (deoxyribonucleotide)n-3'-hydroxyl + 5'-phospho-(deoxyribonucleotide)m = (deoxyribonucleotide)n+m + AMP + beta-nicotinamide D-nucleotide.. Functionally, DNA ligase that catalyzes the formation of phosphodiester linkages between 5'-phosphoryl and 3'-hydroxyl groups in double-stranded DNA using NAD as a coenzyme and as the energy source for the reaction. It is essential for DNA replication and repair of damaged DNA. This is DNA ligase from Burkholderia ambifaria (strain ATCC BAA-244 / DSM 16087 / CCUG 44356 / LMG 19182 / AMMD) (Burkholderia cepacia (strain AMMD)).